A 214-amino-acid chain; its full sequence is Cdc42 effector protein 2 (214 aa).

Residue serine 2 is modified to N-acetylserine. The 15-residue stretch at 30 to 44 (ISPPLGDFRHTIHIG) folds into the CRIB domain. Residues serine 31, serine 101, serine 137, serine 141, and serine 145 each carry the phosphoserine modification. The segment at 119-177 (LTLPTAQAPPKPPRLHLESPQPSPQPSPQGAGNVDVWRIPEAGSPHNGMSPEPEAEEPF) is disordered.

Belongs to the BORG/CEP family. In terms of assembly, interacts with CDC42 and RHOQ in a GTP-dependent manner, and with SEPT7.

The protein resides in the endomembrane system. It localises to the cytoplasm. The protein localises to the cytoskeleton. In terms of biological role, probably involved in the organization of the actin cytoskeleton. May act downstream of CDC42 to induce actin filament assembly leading to cell shape changes. Induces pseudopodia formation in fibroblasts in a CDC42-dependent manner. In Mus musculus (Mouse), this protein is Cdc42 effector protein 2 (Cdc42ep2).